The sequence spans 205 residues: Small ribosomal subunit protein uS4 (205 aa).

Positions 1–46 are disordered; that stretch reads MSKRHSAKYKIDRRMGENLWGRPKSPVNQRSYGPGQHGQRRKQKVS. Positions 94 to 154 constitute an S4 RNA-binding domain; it reads SRLDAIVYRA…EKSRNMALVL (61 aa).

It belongs to the universal ribosomal protein uS4 family. Part of the 30S ribosomal subunit. Contacts protein S5. The interaction surface between S4 and S5 is involved in control of translational fidelity.

Its function is as follows. One of the primary rRNA binding proteins, it binds directly to 16S rRNA where it nucleates assembly of the body of the 30S subunit. Functionally, with S5 and S12 plays an important role in translational accuracy. This chain is Small ribosomal subunit protein uS4, found in Caulobacter sp. (strain K31).